The chain runs to 260 residues: MLAIISPAKTLDFETPAPNFPFANSQPKLTAYSQQLIDICKQFSPAELGSLMSISDKLASLNVARFAEWQLEHNEQNSKAALFAFKGDVYTGLDAETLTQAQVEYARVHLRMLSGLYGLLKPLDLMQPYRLEMGTKLVNPKGKDLYAFWGDIITQHLQTAMDEQGDNILVNLASDEYYGAVKPQKLQATIIKPVFLDEKNGKFKQISFYAKKARGMMVRFILETQPTSVEQLKAFNYGSYWFDEDASGATELVFKREEQA.

It belongs to the UPF0246 family.

This chain is UPF0246 protein APL_0602, found in Actinobacillus pleuropneumoniae serotype 5b (strain L20).